A 737-amino-acid polypeptide reads, in one-letter code: Protein OPG064 (737 aa).

Residue Met1 is modified to N-acetylmethionine; by host. Cysteines 496 and 535 form a disulfide.

The protein belongs to the orthopoxvirus OPG064 family. As to quaternary structure, interacts with host KLC2; this interaction promotes IEV trafficking by engaging the host kinesin-1 complex. Interacts with protein OPG056. Post-translationally, N-acetylated on initiator methionine by host.

Its function is as follows. Plays a role in intracellular enveloped virus (IEV) transport to the cell surface on microtubules. Together with protein OPG056, forms a complex that interacts with host KLC2 (kinesin light chain isoform 2) to engage the kinesin-1 complex and thereby promote IEV trafficking. This Monkeypox virus protein is Protein OPG064 (OPG064).